A 437-amino-acid chain; its full sequence is Aspartic proteinase nepenthesin-1 (437 aa).

The signal sequence occupies residues 1–24; sequence MASSLYSFLLALSIVYIFVAPTHS. A propeptide spans 25 to 78 (activation peptide); it reads TSRTALNHRHEAKVTGFQIMLEHVDSGKNLTKFQLLERAIERGSRRLQRLEAML. 2 N-linked (GlcNAc...) asparagine glycosylation sites follow: Asn53 and Asn98. The Peptidase A1 domain occupies 95 to 430; that stretch reads YLMNLSIGTP…DTGNSVVSFA (336 aa). Asp113 is a catalytic residue. 6 disulfides stabilise this stretch: Cys123-Cys126, Cys129-Cys203, Cys150-Cys168, Cys155-Cys163, Cys240-Cys434, and Cys354-Cys395. N-linked (GlcNAc...) asparagine glycosylation is present at Asn131. Residues Asn198, Asn267, and Asn307 are each glycosylated (N-linked (GlcNAc...) asparagine). The active site involves Asp315. The N-linked (GlcNAc...) asparagine glycan is linked to Asn345.

It belongs to the peptidase A1 family.

Its subcellular location is the secreted. The enzyme catalyses Similar to pepsin, but also cleaves on either side of Asp and at Lys-|-Arg.. With respect to regulation, inhibited by pepstatin and by diazoacetyl-D,L-norleucine methyl ester (DAN) in the presence of Cu(2+) ions. In terms of biological role, extracellular proteinase found in the pitcher fluid of carnivorous plants. Digest prey for nitrogen uptake. The protein is Aspartic proteinase nepenthesin-1 (nep1) of Nepenthes gracilis (Slender pitcher plant).